A 955-amino-acid polypeptide reads, in one-letter code: Glycine dehydrogenase (decarboxylating) (955 aa).

An N6-(pyridoxal phosphate)lysine modification is found at K705.

This sequence belongs to the GcvP family. The glycine cleavage system is composed of four proteins: P, T, L and H. It depends on pyridoxal 5'-phosphate as a cofactor.

It carries out the reaction N(6)-[(R)-lipoyl]-L-lysyl-[glycine-cleavage complex H protein] + glycine + H(+) = N(6)-[(R)-S(8)-aminomethyldihydrolipoyl]-L-lysyl-[glycine-cleavage complex H protein] + CO2. Functionally, the glycine cleavage system catalyzes the degradation of glycine. The P protein binds the alpha-amino group of glycine through its pyridoxal phosphate cofactor; CO(2) is released and the remaining methylamine moiety is then transferred to the lipoamide cofactor of the H protein. The sequence is that of Glycine dehydrogenase (decarboxylating) from Aliivibrio fischeri (strain MJ11) (Vibrio fischeri).